The sequence spans 137 residues: ATP synthase epsilon chain, chloroplastic (137 aa).

It belongs to the ATPase epsilon chain family. F-type ATPases have 2 components, CF(1) - the catalytic core - and CF(0) - the membrane proton channel. CF(1) has five subunits: alpha(3), beta(3), gamma(1), delta(1), epsilon(1). CF(0) has three main subunits: a, b and c.

Its subcellular location is the plastid. It localises to the chloroplast thylakoid membrane. Its function is as follows. Produces ATP from ADP in the presence of a proton gradient across the membrane. In Pisum sativum (Garden pea), this protein is ATP synthase epsilon chain, chloroplastic.